We begin with the raw amino-acid sequence, 491 residues long: N-succinylglutamate 5-semialdehyde dehydrogenase (491 aa).

NAD(+) is bound at residue 225–230 (GSSTVG). Residues E248 and C282 contribute to the active site.

The protein belongs to the aldehyde dehydrogenase family. AstD subfamily.

The catalysed reaction is N-succinyl-L-glutamate 5-semialdehyde + NAD(+) + H2O = N-succinyl-L-glutamate + NADH + 2 H(+). It functions in the pathway amino-acid degradation; L-arginine degradation via AST pathway; L-glutamate and succinate from L-arginine: step 4/5. In terms of biological role, catalyzes the NAD-dependent reduction of succinylglutamate semialdehyde into succinylglutamate. The polypeptide is N-succinylglutamate 5-semialdehyde dehydrogenase (Marinobacter nauticus (strain ATCC 700491 / DSM 11845 / VT8) (Marinobacter aquaeolei)).